A 323-amino-acid chain; its full sequence is MKPENKIPVLTRLSDEMKAVVNFQQPGLPPWPADGDIETQRQYYLLERRFWNADAPSMTTRTCAVPTPYGDVTTRLYSPQPTSQATLYYLHGGGFILGNLDTHDRIMRLLARYTGCTVIGIDYSLSPQARYPQAIEETVAVCSYFSQHADEYSLNVEKIGFAGDSAGAMLALASALWLRDKHIRCGNLIAILLWYGLYGLQDSVSRRLFGGAWDGLTREDLDMYEKAYLRNDEDRESPWYCLFNNDLTRDVPPCFIASAEFDPLIDDSRLLHQTLQAHQQPCEYKMYPGTLHAFLHYSRMMTIADDALQDGARFFMARMKTPR.

The short motif at 91–93 (HGG) is the Involved in the stabilization of the negatively charged intermediate by the formation of the oxyanion hole element. Catalysis depends on residues serine 165, aspartate 262, and histidine 292.

This sequence belongs to the 'GDXG' lipolytic enzyme family. Homodimer. Interacts with MalT and MelA.

The protein localises to the cytoplasm. In terms of biological role, displays esterase activity towards short chain fatty esters (acyl chain length of up to 8 carbons). Able to hydrolyze triacetylglycerol (triacetin) and tributyrylglycerol (tributyrin), but not trioleylglycerol (triolein) or cholesterol oleate. Negatively regulates MalT activity by antagonizing maltotriose binding. Inhibits MelA galactosidase activity. The polypeptide is Acetyl esterase (Salmonella choleraesuis (strain SC-B67)).